We begin with the raw amino-acid sequence, 341 residues long: L-threonine 3-dehydrogenase (341 aa).

Residue C38 participates in Zn(2+) binding. Active-site charge relay system residues include T40 and H43. Zn(2+)-binding residues include H63, E64, C93, C96, C99, and C107. NAD(+)-binding positions include I175, D195, R200, 262 to 264, and 286 to 287; these read LGI and IY.

The protein belongs to the zinc-containing alcohol dehydrogenase family. As to quaternary structure, homotetramer. Zn(2+) is required as a cofactor.

Its subcellular location is the cytoplasm. It catalyses the reaction L-threonine + NAD(+) = (2S)-2-amino-3-oxobutanoate + NADH + H(+). It participates in amino-acid degradation; L-threonine degradation via oxydo-reductase pathway; glycine from L-threonine: step 1/2. In terms of biological role, catalyzes the NAD(+)-dependent oxidation of L-threonine to 2-amino-3-ketobutyrate. This Marinomonas sp. (strain MWYL1) protein is L-threonine 3-dehydrogenase.